The chain runs to 391 residues: 3-ketoacyl-CoA thiolase (391 aa).

Catalysis depends on cysteine 95, which acts as the Acyl-thioester intermediate. Active-site proton acceptor residues include histidine 347 and cysteine 377.

It belongs to the thiolase-like superfamily. Thiolase family. In terms of assembly, heterotetramer of two alpha chains (FadB) and two beta chains (FadA).

It localises to the cytoplasm. The catalysed reaction is an acyl-CoA + acetyl-CoA = a 3-oxoacyl-CoA + CoA. The protein operates within lipid metabolism; fatty acid beta-oxidation. In terms of biological role, catalyzes the final step of fatty acid oxidation in which acetyl-CoA is released and the CoA ester of a fatty acid two carbons shorter is formed. In Hahella chejuensis (strain KCTC 2396), this protein is 3-ketoacyl-CoA thiolase.